The sequence spans 40 residues: Natriuretic peptide TNPd (40 aa).

Cys9 and Cys25 form a disulfide bridge.

This sequence belongs to the natriuretic peptide family. Expressed by the venom gland.

The protein localises to the secreted. Its function is as follows. Snake venom natriuretic peptide that exhibits vasoactive and hypotensive activity. Stimulates cGMP production through the natriuretic peptide receptor 1 (NPR1) with very high potencies for the rat NPR1 (EC(50)=18 nM), and very weak potencies over human NPR1 (30% activation at 10 uM). The protein is Natriuretic peptide TNPd of Oxyuranus microlepidotus (Inland taipan).